The following is a 146-amino-acid chain: MKLHELKPAEGSRKVRNRVGRGIGSGNGKTAGKGHKGQNARSGGGVRLGFEGGQTPLFRRLPKRGFTNINRKEFTIVNLSTLNRFEDGTEVTPELLLETGVISKLNDGVKILASGAVEKKLTVKAHKFSSSAKEAIEAAGGSVEVI.

Over residues 1–13 (MKLHELKPAEGSR) the composition is skewed to basic and acidic residues. The tract at residues 1 to 51 (MKLHELKPAEGSRKVRNRVGRGIGSGNGKTAGKGHKGQNARSGGGVRLGFE) is disordered. 2 stretches are compositionally biased toward gly residues: residues 21–31 (RGIGSGNGKTA) and 42–51 (SGGGVRLGFE).

This sequence belongs to the universal ribosomal protein uL15 family. Part of the 50S ribosomal subunit.

Binds to the 23S rRNA. The sequence is that of Large ribosomal subunit protein uL15 from Bacillus cereus (strain G9842).